Reading from the N-terminus, the 160-residue chain is Putative pre-16S rRNA nuclease (160 aa).

Belongs to the YqgF nuclease family.

The protein resides in the cytoplasm. Its function is as follows. Could be a nuclease involved in processing of the 5'-end of pre-16S rRNA. This chain is Putative pre-16S rRNA nuclease, found in Cereibacter sphaeroides (strain ATCC 17029 / ATH 2.4.9) (Rhodobacter sphaeroides).